The following is a 1004-amino-acid chain: Cadmium/zinc-transporting ATPase HMA3 (1004 aa).

The region spanning lysine 42–serine 108 is the HMA domain. Transmembrane regions (helical) follow at residues arginine 120–tryptophan 140, proline 144–glycine 164, leucine 171–aspartate 191, threonine 193–cysteine 213, cysteine 340–alanine 360, tryptophan 371–proline 391, isoleucine 683–alanine 703, and valine 707–methionine 727. Residues threonine 931 to glycine 952 form a disordered region.

It belongs to the cation transport ATPase (P-type) (TC 3.A.3) family. Type IB subfamily. As to expression, specifically expressed in roots.

It is found in the vacuole membrane. The catalysed reaction is Zn(2+)(in) + ATP + H2O = Zn(2+)(out) + ADP + phosphate + H(+). It carries out the reaction Cd(2+)(in) + ATP + H2O = Cd(2+)(out) + ADP + phosphate + H(+). Functionally, root-specific cadmium (Cd) transporter that mediates Cd efflux in root vacuoles. Involved in Cd detoxification by sequestrating Cd into root vacuoles and limiting translocation of Cd from the roots to the shoots, and accumulation in grains. The sequence is that of Cadmium/zinc-transporting ATPase HMA3 from Oryza sativa subsp. japonica (Rice).